A 274-amino-acid chain; its full sequence is NAD kinase (274 aa).

The Proton acceptor role is filled by Asp59. Residues 59-60 (DG), Lys64, 128-129 (ND), Asp158, 169-174 (TAYALS), and Ala193 contribute to the NAD(+) site.

This sequence belongs to the NAD kinase family. A divalent metal cation is required as a cofactor.

The protein resides in the cytoplasm. The enzyme catalyses NAD(+) + ATP = ADP + NADP(+) + H(+). Functionally, involved in the regulation of the intracellular balance of NAD and NADP, and is a key enzyme in the biosynthesis of NADP. Catalyzes specifically the phosphorylation on 2'-hydroxyl of the adenosine moiety of NAD to yield NADP. This is NAD kinase from Petrotoga mobilis (strain DSM 10674 / SJ95).